The primary structure comprises 205 residues: Ribosomal RNA small subunit methyltransferase G (205 aa).

S-adenosyl-L-methionine-binding positions include Gly-70, Leu-75, 121 to 122 (IE), and Arg-136.

It belongs to the methyltransferase superfamily. RNA methyltransferase RsmG family.

The protein localises to the cytoplasm. The enzyme catalyses guanosine(527) in 16S rRNA + S-adenosyl-L-methionine = N(7)-methylguanosine(527) in 16S rRNA + S-adenosyl-L-homocysteine. In terms of biological role, specifically methylates the N7 position of guanine in position 527 of 16S rRNA. The sequence is that of Ribosomal RNA small subunit methyltransferase G from Methylococcus capsulatus (strain ATCC 33009 / NCIMB 11132 / Bath).